The chain runs to 640 residues: Threonine--tRNA ligase (640 aa).

In terms of domain architecture, TGS spans 1–61 (MPIITLPDGS…DRDATLQIIT (61 aa)). The catalytic stretch occupies residues 242–533 (DHRRIGKQLD…LIEHYAGAFP (292 aa)). Zn(2+) contacts are provided by Cys333, His384, and His510.

This sequence belongs to the class-II aminoacyl-tRNA synthetase family. In terms of assembly, homodimer. The cofactor is Zn(2+).

It localises to the cytoplasm. It carries out the reaction tRNA(Thr) + L-threonine + ATP = L-threonyl-tRNA(Thr) + AMP + diphosphate + H(+). Catalyzes the attachment of threonine to tRNA(Thr) in a two-step reaction: L-threonine is first activated by ATP to form Thr-AMP and then transferred to the acceptor end of tRNA(Thr). Also edits incorrectly charged L-seryl-tRNA(Thr). The sequence is that of Threonine--tRNA ligase from Pseudomonas aeruginosa (strain LESB58).